Consider the following 289-residue polypeptide: ATP synthase gamma chain (289 aa).

This sequence belongs to the ATPase gamma chain family. As to quaternary structure, F-type ATPases have 2 components, CF(1) - the catalytic core - and CF(0) - the membrane proton channel. CF(1) has five subunits: alpha(3), beta(3), gamma(1), delta(1), epsilon(1). CF(0) has three main subunits: a, b and c.

The protein localises to the cell inner membrane. In terms of biological role, produces ATP from ADP in the presence of a proton gradient across the membrane. The gamma chain is believed to be important in regulating ATPase activity and the flow of protons through the CF(0) complex. This is ATP synthase gamma chain from Haemophilus influenzae (strain PittGG).